A 1171-amino-acid polypeptide reads, in one-letter code: Protein diaphanous homolog 3 (1171 aa).

Residues 1–15 show a composition bias toward basic and acidic residues; it reads MERHRARALGRDSKS. The segment at 1–40 is disordered; sequence MERHRARALGRDSKSSRRKGLQSAPPAGPYEPGEKRPKLH. The Nuclear localization signal motif lies at 16–39; it reads SRRKGLQSAPPAGPYEPGEKRPKL. A Phosphothreonine modification is found at threonine 47. Serine 56 is modified (phosphoserine). Positions 60–95 are disordered; it reads PGSKKERPPLPHLKTVSGISDSSSLSSETMENNPKA. Residues 76 to 86 show a composition bias toward low complexity; that stretch reads SGISDSSSLSS. A GBD/FH3 domain is found at 93 to 455; that stretch reads PKALPESEVL…QIVLHRDGTD (363 aa). Phosphoserine is present on serine 154. Coiled coils occupy residues 373-403 and 478-533; these read EHKE…YSML and QAKL…FGAL. The interval 532 to 601 is disordered; sequence ALPPGTKIPL…PPPPLGFLGG (70 aa). Residues 540–610 enclose the FH1 domain; that stretch reads PLQPSVEGEA…GQSSIPLNLP (71 aa). Pro residues predominate over residues 553–596; the sequence is ALPPAPPALSGGVPPPPPPPPPPPPPLPGMPMPFGGPVPPPPPL. Residue serine 604 is modified to Phosphoserine. The 399-residue stretch at 615–1013 folds into the FH2 domain; the sequence is PKKEFKPEIS…EKRARIAKER (399 aa). Coiled-coil stretches lie at residues 887 to 918 and 988 to 1038; these read DKAS…LETF and MLAL…GDET. A DAD domain is found at 1036–1066; the sequence is DETGVMDSLLEALQSGAAFRDRRKRTPKLKD. Phosphoserine occurs at positions 1072 and 1157. Residues 1162-1171 carry the Nuclear export signal motif; the sequence is EALLARLRAL.

Belongs to the formin homology family. Diaphanous subfamily. Ubiquitinated.

It is found in the cytoplasm. It localises to the nucleus. Its function is as follows. Actin nucleation and elongation factor required for the assembly of F-actin structures, such as actin cables and stress fibers. Required for cytokinesis, stress fiber formation and transcriptional activation of the serum response factor. Binds to GTP-bound form of Rho and to profilin: acts in a Rho-dependent manner to recruit profilin to the membrane, where it promotes actin polymerization. DFR proteins couple Rho and Src tyrosine kinase during signaling and the regulation of actin dynamics. Also acts as an actin nucleation and elongation factor in the nucleus by promoting nuclear actin polymerization inside the nucleus to drive serum-dependent SRF-MRTFA activity. This chain is Protein diaphanous homolog 3 (Diaph3), found in Mus musculus (Mouse).